Here is a 714-residue protein sequence, read N- to C-terminus: Mitochondrial potassium channel ATP-binding subunit (714 aa).

Residues 1-25 (MLVHLFRVGIRGGPVPRWSLQSLRF) constitute a mitochondrion transit peptide. 4 consecutive transmembrane segments (helical) span residues 127–147 (LLALGLAIVLALGAALVNVQI), 178–198 (IQLLLLYGVQGLLTFGYLVLL), 278–298 (LMLAVVTPALMGVGTLMGSGL), and 365–385 (NIAFNCMVLGTLFIGGSLVAG). Residues 132–419 (LAIVLALGAA…LSVLFGQVVR (288 aa)) form the ABC transmembrane type-1 domain. One can recognise an ABC transporter domain in the interval 454-691 (ITFQNVSFSY…GGLYAELIRR (238 aa)). 489–496 (GQSGGGKT) is a binding site for ATP.

Belongs to the ABC transporter superfamily. ABCB family. Multidrug resistance exporter (TC 3.A.1.201) subfamily. The mitochondrial potassium channel (mitoK(ATP)) is composed of 4 subunits of CCDC51/MITOK and 4 subunits of ABCB8/MITOSUR. Physically interacts with PAAT. Interacts with Neuropilin-1 (NRP1) in mitochondria. In terms of tissue distribution, strong expression is found in the heart, brain and testis. In the testis, expressed both in the somatic Sertoli cells and peritubular cells and in the germline (spermatogonia and pachytene spermatocytes). Also expressed in the lung, liver, intestine and kidney.

It is found in the mitochondrion inner membrane. Channel activity inhibited by ATP via ABCB8/MITOSUR subunit. Functionally, ATP-binding subunit of the mitochondrial ATP-gated potassium channel (mitoK(ATP)). v. An increase in ATP intracellular levels closes the channel, inhibiting K(+) transport, whereas a decrease in ATP levels enhances K(+) uptake in the mitochondrial matrix. Plays a role in mitochondrial iron transport. Required for maintenance of normal cardiac function, possibly by influencing mitochondrial iron export and regulating the maturation of cytosolic iron sulfur cluster-containing enzymes. The protein is Mitochondrial potassium channel ATP-binding subunit of Rattus norvegicus (Rat).